Consider the following 774-residue polypeptide: MSALHAFPGGLCLPANKERSTALPIQQAPLAQRYIVPLGQHIGAPARPCVEVGQAVLKGQTIALPDGTVSAALHAPTSGTVVAIGAHPYPHASGLPAPAIVIASDGLERWTELHPCPDFRAESPLALLERIRAAGIGGLGGAGFPTAAKLAARPAEKIHTLVVNGAECEPYISADDLLMRERATQVLGGIDILVQILCPEEVLVGIEDDKPEAIAALGAALGERPYRIVALPTRYPSGGERQLIQLLTGREVPADGLPADIGILCQNVGTLAAVHDAVVLGRPLISRITTLAGGALERPMNVEALIGTPVHELLAFAGLAEGRLERVLMGGPMMGFALPDLSVPLIKTCNCLLAGDATELPEPVPAMPCIRCGDCAQVCPVSLLPQQLHFFALGDEHEQLLAHNLFDCIECGACAYVCPSSIPLVQYYRASKAEIREQRQKLLKAEQSRERFEQRQARLRRDEERRAAERAQRAEKAALARAAQAEREEAAPATAVDPVQAAIERARARKQAGSGSERLKRLKIEASMARVALKKAEKQLLSHDTPEQHGLVAELRAAAEAADKALADAEASLPRDLPSAPPAALDDEAELKKAKAQAAMARAQLKRSEKAFGEAPGAEQRATLDELRAEVERCEATLARLERHAPKPAAPGDDGQAALKRAKIALVGKRAALKKAEQAGVMDSELERLRGELQAAERDLHAAEDACGKPAPELVRIDKRPVDPRIRELKTELAYARAALKKLERLANADAAALAAARARLSAAERALTEHGTE.

2 consecutive 4Fe-4S ferredoxin-type domains span residues 359–389 (ELPEPVPAMPCIRCGDCAQVCPVSLLPQQLH) and 399–428 (QLLAHNLFDCIECGACAYVCPSSIPLVQYY). [4Fe-4S] cluster contacts are provided by Cys-369, Cys-372, Cys-375, Cys-379, Cys-408, Cys-411, Cys-414, and Cys-418. A compositionally biased stretch (basic and acidic residues) spans 453 to 490 (EQRQARLRRDEERRAAERAQRAEKAALARAAQAEREEA). A disordered region spans residues 453–493 (EQRQARLRRDEERRAAERAQRAEKAALARAAQAEREEAAPA).

This sequence belongs to the 4Fe4S bacterial-type ferredoxin family. RnfC subfamily. As to quaternary structure, the complex is composed of six subunits: RnfA, RnfB, RnfC, RnfD, RnfE and RnfG. [4Fe-4S] cluster serves as cofactor.

The protein resides in the cell inner membrane. Part of a membrane-bound complex that couples electron transfer with translocation of ions across the membrane. The protein is Ion-translocating oxidoreductase complex subunit C of Pseudomonas aeruginosa (strain ATCC 15692 / DSM 22644 / CIP 104116 / JCM 14847 / LMG 12228 / 1C / PRS 101 / PAO1).